The chain runs to 265 residues: MASELPMSPHLEQIHGEIRDHFRALANGFQRLDKIKDSSRQSKQLEELAEKMRDCKRLVKEFDRELKDGEARNSPQVNKQLNDEKQSMIKELNSYVALRKTYLNTLGNKKVELFDTGAGVSGEPTAEENVQMASTMSNQELVDAGMKRMDETDQAIERSKQVVHQTLEVGTQTASNLKGQTDQMGRVVNDLDTIQFSLKKASQLVKEIGRQVATDKCIMAFLFLIVCGVIAIIIVKIVNPNNKDIRDIPGLAPPAQSRKLLYFRE.

The Cytoplasmic segment spans residues 1 to 217 (MASELPMSPH…IGRQVATDKC (217 aa)). The stretch at 32–106 (LDKIKDSSRQ…ALRKTYLNTL (75 aa)) forms a coiled coil. S74 carries the post-translational modification Phosphoserine. One can recognise a t-SNARE coiled-coil homology domain in the interval 146-208 (MKRMDETDQA…KKASQLVKEI (63 aa)). Residues 218–238 (IMAFLFLIVCGVIAIIIVKIV) traverse the membrane as a helical; Anchor for type IV membrane protein segment. Topologically, residues 239 to 265 (NPNNKDIRDIPGLAPPAQSRKLLYFRE) are vesicular.

It belongs to the novel plant SNARE family. As to expression, expressed in roots, stems, flower, siliques and leaves.

It is found in the membrane. Its function is as follows. Vesicle trafficking protein that functions in the secretory pathway. This Arabidopsis thaliana (Mouse-ear cress) protein is Novel plant SNARE 12 (NPSN12).